The primary structure comprises 142 residues: Acidic phospholipase A2 KBf-grIB (142 aa).

7 disulfide bridges follow: C28–C94, C44–C141, C46–C62, C61–C122, C68–C115, C78–C108, and C101–C113. 3 residues coordinate Ca(2+): Y45, G47, and G49. Residue H65 is part of the active site. Residue D66 coordinates Ca(2+). D116 is a catalytic residue.

It belongs to the phospholipase A2 family. Group I subfamily. D49 sub-subfamily. It depends on Ca(2+) as a cofactor. Expressed by the venom gland.

Its subcellular location is the secreted. The catalysed reaction is a 1,2-diacyl-sn-glycero-3-phosphocholine + H2O = a 1-acyl-sn-glycero-3-phosphocholine + a fatty acid + H(+). Its function is as follows. PLA2 catalyzes the calcium-dependent hydrolysis of the 2-acyl groups in 3-sn-phosphoglycerides. This Bungarus fasciatus (Banded krait) protein is Acidic phospholipase A2 KBf-grIB.